Reading from the N-terminus, the 507-residue chain is MRINPGEIVKVLESKIEGFKEEINLNDVGKVIQVGDGIARAYGLNNVMANEMVEFVETGTIGMAFNLEEDNVGIIILGDYKDIKEGYTVKRLNRIMQVPVGEALLGRVVNPLGEPLDGLGPIDAKEYRDVEVKAPGVIYRKPVDTPLQTGIKLIDALIPIGRGQRELIIGDRQTGKTAIAIDTIINQKGKGVYCIYVAIGQKASAVARLVDKLKQHGAMEYTTVVVASAADNASLQYIAPYAGCAMGEYFMYKGKDALVIYDDLSKHAVAYRQLSLLLRRPPGREAYPGDVFYLHSRLLERAARLDDKYGGGSLTALPIIETQANDISAYIPTNVISITDGQIYLEPSLFYAGQRPAVNIGLSVSRVGGAAQVKAMKKVAGSLKLDLAQYQELETFAQFATELDPATQAQITRGQRLMELMKQEQYSPLEVEEQVAVLYAGINGYLDDLDVEKVRDFEKRFLQYLKENKSELLKQIRETKDLNEELENELRNAIEDYKSEFVKMYGK.

Residue 170–177 (GDRQTGKT) participates in ATP binding.

Belongs to the ATPase alpha/beta chains family. F-type ATPases have 2 components, CF(1) - the catalytic core - and CF(0) - the membrane proton channel. CF(1) has five subunits: alpha(3), beta(3), gamma(1), delta(1), epsilon(1). CF(0) has three main subunits: a(1), b(2) and c(9-12). The alpha and beta chains form an alternating ring which encloses part of the gamma chain. CF(1) is attached to CF(0) by a central stalk formed by the gamma and epsilon chains, while a peripheral stalk is formed by the delta and b chains.

It is found in the cell inner membrane. The enzyme catalyses ATP + H2O + 4 H(+)(in) = ADP + phosphate + 5 H(+)(out). Its function is as follows. Produces ATP from ADP in the presence of a proton gradient across the membrane. The alpha chain is a regulatory subunit. This Thermosipho melanesiensis (strain DSM 12029 / CIP 104789 / BI429) protein is ATP synthase subunit alpha.